A 612-amino-acid chain; its full sequence is Isocitrate dehydrogenase kinase/phosphatase (612 aa).

Residues Ala327–Leu333 and Lys348 each bind ATP. Asp383 is a catalytic residue. Positions Ala593–Ala612 are disordered.

The protein belongs to the AceK family.

It localises to the cytoplasm. It carries out the reaction L-seryl-[isocitrate dehydrogenase] + ATP = O-phospho-L-seryl-[isocitrate dehydrogenase] + ADP + H(+). Its function is as follows. Bifunctional enzyme which can phosphorylate or dephosphorylate isocitrate dehydrogenase (IDH) on a specific serine residue. This is a regulatory mechanism which enables bacteria to bypass the Krebs cycle via the glyoxylate shunt in response to the source of carbon. When bacteria are grown on glucose, IDH is fully active and unphosphorylated, but when grown on acetate or ethanol, the activity of IDH declines drastically concomitant with its phosphorylation. This is Isocitrate dehydrogenase kinase/phosphatase from Paraburkholderia phytofirmans (strain DSM 17436 / LMG 22146 / PsJN) (Burkholderia phytofirmans).